The chain runs to 561 residues: Transcription factor Clamp (561 aa).

A C2H2-type 1 zinc finger spans residues 127–149 (FKCDVCSDMFPHLALLNAHKRMH). Residues cysteine 129, cysteine 132, histidine 145, and histidine 149 each coordinate Zn(2+). The segment at 290 to 315 (TGGTTPKREASSGSGHHPVKKRNSQQ) is disordered. 6 C2H2-type zinc fingers span residues 360-382 (FSCN…KKLH), 388-410 (YKCS…ARIH), 416-438 (YKCQ…ERTH), 444-466 (YVCG…RRIH), 472-494 (YKCE…AKVH), and 500-522 (YKCE…RGIH).

As to quaternary structure, homodimer. Interacts with msl-2; promoting recruitment of the male-specific lethal (MSL) histone acetyltransferase complex to chromatin. Interacts with Nelf-A. Interacts with NELF-B.

It localises to the nucleus. The protein localises to the chromosome. Its function is as follows. Transcription factor involved in X-chromosome dosage compensation in males, the process by which transcription of the single X chromosome in the male is elevated. Binds to the DNA sequence (GA)n. Clamp-binding promotes nucleosome depletion and chromatin accessibility, thereby allowing access to other transcription factors. Specifically binds to cis-acting elements on the X-chromosome named chromatin entry sites and promotes recruitment of the male-specific lethal (MSL) histone acetyltransferase complex, which associates with actively transcribed genes on the male X-chromosome to upregulate their expression. Mechanistically, acts by promoting chromatin accessibility at chromatin entry sites, facilitating DNA-binding of msl-2, followed by MSL complex recruitment. In addition to dosage compensation, also involved in zygotic genome activation (ZGA), a critical event in early embryonic development during which the developmental control passes from maternally provided mRNAs to the expression of the zygotic genome after fertilization. Maternally-provided protein cooperates with Zelda (zld) to activate zygotic transcription by increasing chromatin accessibility at promoters of specific genes and facilitate zld occupancy at a subset of key embryonic promoters. Also acts as an activator of gypsy chromatin insulator function by promoting binding of Cp190 to chromatin. This Drosophila melanogaster (Fruit fly) protein is Transcription factor Clamp.